The following is a 223-amino-acid chain: Cytochrome c biogenesis ATP-binding export protein CcmA (223 aa).

The ABC transporter domain occupies 1 to 223; the sequence is MRSLACERDE…KSDMAVGNDY (223 aa). 31-38 provides a ligand contact to ATP; that stretch reads GSNGAGKT.

The protein belongs to the ABC transporter superfamily. CcmA exporter (TC 3.A.1.107) family. The complex is composed of two ATP-binding proteins (CcmA) and two transmembrane proteins (CcmB).

It is found in the cell inner membrane. It catalyses the reaction heme b(in) + ATP + H2O = heme b(out) + ADP + phosphate + H(+). Its function is as follows. Part of the ABC transporter complex CcmAB involved in the biogenesis of c-type cytochromes; once thought to export heme, this seems not to be the case, but its exact role is uncertain. Responsible for energy coupling to the transport system. In Saccharophagus degradans (strain 2-40 / ATCC 43961 / DSM 17024), this protein is Cytochrome c biogenesis ATP-binding export protein CcmA.